The sequence spans 227 residues: UPF0173 metal-dependent hydrolase BCG9842_B0515 (227 aa).

The protein belongs to the UPF0173 family.

This Bacillus cereus (strain G9842) protein is UPF0173 metal-dependent hydrolase BCG9842_B0515.